The chain runs to 103 residues: Large ribosomal subunit protein bL21 (103 aa).

Belongs to the bacterial ribosomal protein bL21 family. In terms of assembly, part of the 50S ribosomal subunit. Contacts protein L20.

Its function is as follows. This protein binds to 23S rRNA in the presence of protein L20. The protein is Large ribosomal subunit protein bL21 of Clostridioides difficile (strain 630) (Peptoclostridium difficile).